The chain runs to 116 residues: Methionine-R-sulfoxide reductase B1 (116 aa).

The region spanning 1-106 is the MsrB domain; sequence MSFCSFFGGE…FSSSLKFVPK (106 aa). Zn(2+)-binding residues include Cys-23, Cys-26, Cys-71, and Cys-74. Residue Sec-95 is the Nucleophile of the active site. Sec-95 is a non-standard amino acid (selenocysteine).

This sequence belongs to the MsrB Met sulfoxide reductase family. Zn(2+) is required as a cofactor. In terms of processing, truncated MSRB1/SEPX1 proteins produced by failed UGA/Sec decoding are ubiquitinated by the CRL2(FEM1C) E3 ubiquitin-protein ligase complex.

The protein resides in the cytoplasm. Its subcellular location is the nucleus. It is found in the cytoskeleton. It carries out the reaction L-methionyl-[protein] + [thioredoxin]-disulfide + H2O = L-methionyl-(R)-S-oxide-[protein] + [thioredoxin]-dithiol. It catalyses the reaction [thioredoxin]-disulfide + L-methionine + H2O = L-methionine (R)-S-oxide + [thioredoxin]-dithiol. In terms of biological role, methionine-sulfoxide reductase that specifically reduces methionine (R)-sulfoxide back to methionine. While in many cases, methionine oxidation is the result of random oxidation following oxidative stress, methionine oxidation is also a post-translational modification that takes place on specific residue. Acts as a regulator of actin assembly by reducing methionine (R)-sulfoxide mediated by MICALs (MICAL1, MICAL2 or MICAL3) on actin, thereby promoting filament repolymerization. Plays a role in innate immunity by reducing oxidized actin, leading to actin repolymerization in macrophages. The protein is Methionine-R-sulfoxide reductase B1 (Msrb1) of Mus musculus (Mouse).